The following is a 363-amino-acid chain: MKTVINIFILFTFLASLSANAQRIKDLADVAGVRSNQLIGYGLVVGLPGTGEQSPFTEQSFKTMLSNFGITMPDKLKPKIKNVAAVAVHAELSAFTKPGQTIDVTVSSMGSAQSLRGGTLIQTILMGIDGNAYAVAQGSLIVSGLGAQGLDGSQVLVNIPTVGRIANGGIVEREVKSPFSSGDHITFNLRHSDFTTAKLLSDTINDLIEGSAKALDATSVRVRAPRDISDRVSFLSVLENLEFEPASPAAKIIVNSRTGTIVIGSEVTLLAAAITHGGITVTINEIQDVSQPNAFAEGETVVTNQSDINVSNSDARMFVFKPGVTLETLVRAINEVGAGPGDVMAILEALDQAGAIRGELVII.

The signal sequence occupies residues 1–21; it reads MKTVINIFILFTFLASLSANA.

The protein belongs to the FlgI family. In terms of assembly, the basal body constitutes a major portion of the flagellar organelle and consists of four rings (L,P,S, and M) mounted on a central rod.

The protein localises to the periplasm. The protein resides in the bacterial flagellum basal body. In terms of biological role, assembles around the rod to form the L-ring and probably protects the motor/basal body from shearing forces during rotation. This chain is Flagellar P-ring protein, found in Colwellia psychrerythraea (strain 34H / ATCC BAA-681) (Vibrio psychroerythus).